The chain runs to 234 residues: Leucyl/phenylalanyl-tRNA--protein transferase (234 aa).

It belongs to the L/F-transferase family.

The protein resides in the cytoplasm. The enzyme catalyses N-terminal L-lysyl-[protein] + L-leucyl-tRNA(Leu) = N-terminal L-leucyl-L-lysyl-[protein] + tRNA(Leu) + H(+). The catalysed reaction is N-terminal L-arginyl-[protein] + L-leucyl-tRNA(Leu) = N-terminal L-leucyl-L-arginyl-[protein] + tRNA(Leu) + H(+). It catalyses the reaction L-phenylalanyl-tRNA(Phe) + an N-terminal L-alpha-aminoacyl-[protein] = an N-terminal L-phenylalanyl-L-alpha-aminoacyl-[protein] + tRNA(Phe). In terms of biological role, functions in the N-end rule pathway of protein degradation where it conjugates Leu, Phe and, less efficiently, Met from aminoacyl-tRNAs to the N-termini of proteins containing an N-terminal arginine or lysine. The polypeptide is Leucyl/phenylalanyl-tRNA--protein transferase (Nitratidesulfovibrio vulgaris (strain ATCC 29579 / DSM 644 / CCUG 34227 / NCIMB 8303 / VKM B-1760 / Hildenborough) (Desulfovibrio vulgaris)).